The following is an 828-amino-acid chain: Kinesin-associated protein 3 (828 aa).

3 ARM repeats span residues 332 to 372, 373 to 411, and 577 to 611; these read YVEN…NLSF, DTDLRGKMIKLGMLPKFVELLANDNHRLVVLCVLYHVSQ, and DDSCAAMLAKSGIIQSLIELLNAKQEDDEIVCQIV.

Heterotrimer of a 115 kDa subunit (KAP115) and two kinesin-like subunits of 95 kDa (KRP95) and 85 kDa (KRP85).

Functionally, binds to the tail domain of the KRP85/KRP95 heterodimer to form a heterotrimeric kinesin-II complex and may regulate the spindle vesicle targeting of this complex. This Strongylocentrotus purpuratus (Purple sea urchin) protein is Kinesin-associated protein 3 (KAP115).